Consider the following 166-residue polypeptide: Regulatory protein RecX (166 aa).

This sequence belongs to the RecX family.

The protein localises to the cytoplasm. Modulates RecA activity. This is Regulatory protein RecX from Escherichia coli (strain K12 / MC4100 / BW2952).